The chain runs to 72 residues: Translation initiation factor IF-1 (72 aa).

The region spanning 1–72 (MSKEDMIEFS…TKGRITFRFK (72 aa)) is the S1-like domain.

This sequence belongs to the IF-1 family. In terms of assembly, component of the 30S ribosomal translation pre-initiation complex which assembles on the 30S ribosome in the order IF-2 and IF-3, IF-1 and N-formylmethionyl-tRNA(fMet); mRNA recruitment can occur at any time during PIC assembly.

The protein localises to the cytoplasm. In terms of biological role, one of the essential components for the initiation of protein synthesis. Stabilizes the binding of IF-2 and IF-3 on the 30S subunit to which N-formylmethionyl-tRNA(fMet) subsequently binds. Helps modulate mRNA selection, yielding the 30S pre-initiation complex (PIC). Upon addition of the 50S ribosomal subunit IF-1, IF-2 and IF-3 are released leaving the mature 70S translation initiation complex. The chain is Translation initiation factor IF-1 from Granulibacter bethesdensis (strain ATCC BAA-1260 / CGDNIH1).